The chain runs to 211 residues: Protein-L-isoaspartate O-methyltransferase (211 aa).

The active site involves Ser-60.

The protein belongs to the methyltransferase superfamily. L-isoaspartyl/D-aspartyl protein methyltransferase family.

Its subcellular location is the cytoplasm. It carries out the reaction [protein]-L-isoaspartate + S-adenosyl-L-methionine = [protein]-L-isoaspartate alpha-methyl ester + S-adenosyl-L-homocysteine. Its function is as follows. Catalyzes the methyl esterification of L-isoaspartyl residues in peptides and proteins that result from spontaneous decomposition of normal L-aspartyl and L-asparaginyl residues. It plays a role in the repair and/or degradation of damaged proteins. The protein is Protein-L-isoaspartate O-methyltransferase of Pseudomonas paraeruginosa (strain DSM 24068 / PA7) (Pseudomonas aeruginosa (strain PA7)).